Reading from the N-terminus, the 240-residue chain is Splicing factor rtf2 (240 aa).

Disordered regions lie at residues 1–22 and 181–240; these read MGND…GKVP and SLNK…RVKI. Over residues 185–210 the composition is skewed to basic residues; it reads ASKKSNKNGDKKRKHVSKSNSKHAKH. Composition is skewed to basic and acidic residues over residues 211 to 224 and 231 to 240; these read ELRT…ENVK and DMERVKRVKI.

The protein belongs to the rtf2 family. Interacts with pcn1.

Its subcellular location is the nucleus. Its function is as follows. Putative splicing factor that is required for the correct splicing of a subset of pre-mRNAs. Required for the correct splicing of rtf1, a replication termination factor that mediates site-specific replication termination at replication barrier RTS1. This Schizosaccharomyces pombe (strain 972 / ATCC 24843) (Fission yeast) protein is Splicing factor rtf2.